Consider the following 442-residue polypeptide: Histidine--tRNA ligase (442 aa).

This sequence belongs to the class-II aminoacyl-tRNA synthetase family. Homodimer.

It localises to the cytoplasm. The catalysed reaction is tRNA(His) + L-histidine + ATP = L-histidyl-tRNA(His) + AMP + diphosphate + H(+). This Rhodopirellula baltica (strain DSM 10527 / NCIMB 13988 / SH1) protein is Histidine--tRNA ligase.